A 212-amino-acid polypeptide reads, in one-letter code: Small ribosomal subunit protein uS4c (212 aa).

The S4 RNA-binding domain occupies 89 to 152 (MRLDNIIFRL…RSRALVDKNL (64 aa)).

It belongs to the universal ribosomal protein uS4 family. In terms of assembly, part of the 30S ribosomal subunit. Contacts protein S5. The interaction surface between S4 and S5 is involved in control of translational fidelity.

The protein resides in the plastid. The protein localises to the chloroplast. Functionally, one of the primary rRNA binding proteins, it binds directly to 16S rRNA where it nucleates assembly of the body of the 30S subunit. With S5 and S12 plays an important role in translational accuracy. The sequence is that of Small ribosomal subunit protein uS4c (rps4) from Staurastrum punctulatum (Green alga).